The sequence spans 200 residues: LexA repressor (200 aa).

The H-T-H motif DNA-binding region spans 28–48; that stretch reads RAEIARILGFKSANAAEEHIK. Residues Ser-118 and Lys-155 each act as for autocatalytic cleavage activity in the active site.

It belongs to the peptidase S24 family. In terms of assembly, homodimer.

The catalysed reaction is Hydrolysis of Ala-|-Gly bond in repressor LexA.. Its function is as follows. Represses a number of genes involved in the response to DNA damage (SOS response), including recA and lexA. In the presence of single-stranded DNA, RecA interacts with LexA causing an autocatalytic cleavage which disrupts the DNA-binding part of LexA, leading to derepression of the SOS regulon and eventually DNA repair. The protein is LexA repressor of Cellvibrio japonicus (strain Ueda107) (Pseudomonas fluorescens subsp. cellulosa).